We begin with the raw amino-acid sequence, 225 residues long: Perlwapin-like protein (225 aa).

Positions Met-1–Gly-19 are cleaved as a signal peptide. Cystine bridges form between Cys-27–Cys-57, Cys-36–Cys-61, Cys-43–Cys-56, and Cys-49–Cys-65. Residues Cys-27–Lys-68 form the WAP 1; atypical domain. Asn-67 is a glycosylation site (N-linked (GlcNAc...) asparagine). Positions Ile-117–Ile-169 constitute a WAP 2 domain. Cystine bridges form between Cys-125-Cys-157, Cys-135-Cys-161, Cys-143-Cys-156, and Cys-149-Cys-165. N-linked (GlcNAc...) asparagine glycosylation occurs at Asn-170. A disordered region spans residues Gln-176–Thr-225. Over residues Leu-188 to Pro-201 the composition is skewed to low complexity. Positions Ser-203–Pro-212 are enriched in pro residues. Positions Ser-213 to Thr-225 are enriched in polar residues.

Component of the acid-soluble organic matrix of calcified layers of the shell (at protein level).

The protein resides in the secreted. In Lottia gigantea (Giant owl limpet), this protein is Perlwapin-like protein.